Here is a 244-residue protein sequence, read N- to C-terminus: Guanine nucleotide exchange factor rei-1 (244 aa).

Coiled coils occupy residues 6-39 (DQLISIRKQLENLNNATDDINSYEMKLETVKKQF) and 81-144 (VQQA…KAEK). Positions 221 to 244 (DQIHQERSSQSSLAPSSDAESDSS) are disordered. Low complexity predominate over residues 228-238 (SSQSSLAPSSD).

This sequence belongs to the SH3BP5 family. As to quaternary structure, homodimer, tetramer and multimer. Interacts with rab-11.1. Binds preferentially to the GDP-bound form of rab-11.1. As to expression, expressed in germ cells.

It localises to the cytoplasmic granule. The protein resides in the golgi apparatus membrane. In terms of biological role, guanine nucleotide exchange factor for Rab GTPase Rab-11.1. Spatially and temporally regulates the distribution of Rab-11.1 to target membranes during embryogenesis. Plays a role in cytokinesis, probably by targeting rab-11.1 to the cleavage furrows. The chain is Guanine nucleotide exchange factor rei-1 from Caenorhabditis elegans.